A 382-amino-acid chain; its full sequence is MSTWLLPENIADVLPSEARKIEELRRRLLDRFRSYGYEMVMPPLLEYLESLLTSGGADLRLRTFKLVDQLSGRTLGLRADITPQVARIDAHLLNRQGVTRLCYAGHVMHTRPRGLHATREQIQIGAEIYGHAGLEADLEIQQLMLDALHLAGLSRIRLDLGHAGVLAALLARDAQAAERGESLYDALSGKDVPLLNELTDDLGADTRAALRALPNLYGDASVLAEARTRLPVLPEITRALDDLAQLASQPKGVEVAIDLADLRGYAYHSGAMFSAYIDGVPNAIARGGRYDHVGQAYGRARPATGFSLDLRELARISPVEARGTAILAPWAQDDALGAAVAALRDAGEVVIQALPGHDHVLDEFACDRSLVERNGAWVVEPR.

The protein belongs to the class-II aminoacyl-tRNA synthetase family. HisZ subfamily. In terms of assembly, heteromultimer composed of HisG and HisZ subunits.

The protein resides in the cytoplasm. It participates in amino-acid biosynthesis; L-histidine biosynthesis; L-histidine from 5-phospho-alpha-D-ribose 1-diphosphate: step 1/9. Required for the first step of histidine biosynthesis. May allow the feedback regulation of ATP phosphoribosyltransferase activity by histidine. This chain is ATP phosphoribosyltransferase regulatory subunit, found in Burkholderia cenocepacia (strain ATCC BAA-245 / DSM 16553 / LMG 16656 / NCTC 13227 / J2315 / CF5610) (Burkholderia cepacia (strain J2315)).